We begin with the raw amino-acid sequence, 428 residues long: GTPase Obg (428 aa).

The 158-residue stretch at 1-158 (MFVDKVKVYA…RNLLLELKVL (158 aa)) folds into the Obg domain. The region spanning 159-329 (ADVGLVGFPS…LMLAIADELE (171 aa)) is the OBG-type G domain. Residues 165-172 (GFPSVGKS), 190-194 (FTTIT), 212-215 (DLPG), 282-285 (NKMD), and 310-312 (SAI) contribute to the GTP site. The Mg(2+) site is built by Ser-172 and Thr-192. The 79-residue stretch at 350–428 (KHELPIEPFT…IMKFEFEFVE (79 aa)) folds into the OCT domain.

The protein belongs to the TRAFAC class OBG-HflX-like GTPase superfamily. OBG GTPase family. Monomer. Mg(2+) is required as a cofactor.

Its subcellular location is the cytoplasm. Its function is as follows. An essential GTPase which binds GTP, GDP and possibly (p)ppGpp with moderate affinity, with high nucleotide exchange rates and a fairly low GTP hydrolysis rate. Plays a role in control of the cell cycle, stress response, ribosome biogenesis and in those bacteria that undergo differentiation, in morphogenesis control. The polypeptide is GTPase Obg (Shouchella clausii (strain KSM-K16) (Alkalihalobacillus clausii)).